Consider the following 429-residue polypeptide: Glutamate-1-semialdehyde 2,1-aminomutase 2 (429 aa).

Residue K268 is modified to N6-(pyridoxal phosphate)lysine.

This sequence belongs to the class-III pyridoxal-phosphate-dependent aminotransferase family. HemL subfamily. Homodimer. Pyridoxal 5'-phosphate serves as cofactor.

The protein localises to the cytoplasm. It catalyses the reaction (S)-4-amino-5-oxopentanoate = 5-aminolevulinate. It participates in porphyrin-containing compound metabolism; protoporphyrin-IX biosynthesis; 5-aminolevulinate from L-glutamyl-tRNA(Glu): step 2/2. The polypeptide is Glutamate-1-semialdehyde 2,1-aminomutase 2 (Staphylococcus aureus (strain Mu50 / ATCC 700699)).